Consider the following 170-residue polypeptide: Cyclic pyranopterin monophosphate synthase (170 aa).

Substrate is bound by residues 89 to 91 (LCH) and 125 to 126 (ME). Aspartate 140 is an active-site residue.

It belongs to the MoaC family. As to quaternary structure, homohexamer; trimer of dimers.

It carries out the reaction (8S)-3',8-cyclo-7,8-dihydroguanosine 5'-triphosphate = cyclic pyranopterin phosphate + diphosphate. The protein operates within cofactor biosynthesis; molybdopterin biosynthesis. Its function is as follows. Catalyzes the conversion of (8S)-3',8-cyclo-7,8-dihydroguanosine 5'-triphosphate to cyclic pyranopterin monophosphate (cPMP). The sequence is that of Cyclic pyranopterin monophosphate synthase from Streptomyces coelicolor (strain ATCC BAA-471 / A3(2) / M145).